The primary structure comprises 287 residues: MGIRAFRPYTPGTRERVVSDYAEITRNEPEKSLLVSKHRRKGRNNRGVITCRHRGGGHKRLYRIIDFKRDKRNVPGKIVSIEYDPNRNARISLVYYEDGEKRYILTPAGVHVGTPIIAGDETPIEVGNAMPLQNIPLGTTVHNVELVAGKGGQIVRAAGASAQVVAKEGNYVALKLPSTEVRLVRKECYATIGAVGNAEVRNTSLGKAGRKRWLGRRPEVRGSVMNPVDHPHGGGEGRAPIGRSGPVTPWGKPALGRKTRKKNKQSDRLIQRRRRKSSKRGRGGRDA.

Positions leucine 214–alanine 287 are disordered. Over residues glutamine 271 to alanine 287 the composition is skewed to basic residues.

This sequence belongs to the universal ribosomal protein uL2 family. As to quaternary structure, part of the 50S ribosomal subunit. Forms a bridge to the 30S subunit in the 70S ribosome.

In terms of biological role, one of the primary rRNA binding proteins. Required for association of the 30S and 50S subunits to form the 70S ribosome, for tRNA binding and peptide bond formation. It has been suggested to have peptidyltransferase activity; this is somewhat controversial. Makes several contacts with the 16S rRNA in the 70S ribosome. This Synechococcus elongatus (strain ATCC 33912 / PCC 7942 / FACHB-805) (Anacystis nidulans R2) protein is Large ribosomal subunit protein uL2.